Here is a 364-residue protein sequence, read N- to C-terminus: Aminomethyltransferase (364 aa).

Belongs to the GcvT family. As to quaternary structure, the glycine cleavage system is composed of four proteins: P, T, L and H.

It catalyses the reaction N(6)-[(R)-S(8)-aminomethyldihydrolipoyl]-L-lysyl-[protein] + (6S)-5,6,7,8-tetrahydrofolate = N(6)-[(R)-dihydrolipoyl]-L-lysyl-[protein] + (6R)-5,10-methylene-5,6,7,8-tetrahydrofolate + NH4(+). In terms of biological role, the glycine cleavage system catalyzes the degradation of glycine. This is Aminomethyltransferase from Photorhabdus laumondii subsp. laumondii (strain DSM 15139 / CIP 105565 / TT01) (Photorhabdus luminescens subsp. laumondii).